Consider the following 178-residue polypeptide: Ribosome maturation factor RimP (178 aa).

This sequence belongs to the RimP family.

The protein localises to the cytoplasm. Required for maturation of 30S ribosomal subunits. The chain is Ribosome maturation factor RimP from Streptococcus pyogenes serotype M5 (strain Manfredo).